Here is a 290-residue protein sequence, read N- to C-terminus: Appressoria-specific virulence factor GAS2 (290 aa).

A signal peptide spans 1-19 (MKYTSAILISAFAATNVFA). N-linked (GlcNAc...) asparagine glycosylation is present at Asn-99. The tract at residues 121-140 (LPRAGGGTSTPKGTEETGVK) is disordered.

It localises to the cytoplasm. In terms of biological role, appressoria-specific virulence factor required for appressorial penetration in host and lesion development. This Pyricularia oryzae (strain 70-15 / ATCC MYA-4617 / FGSC 8958) (Rice blast fungus) protein is Appressoria-specific virulence factor GAS2.